Reading from the N-terminus, the 254-residue chain is Phosphonates import ATP-binding protein PhnC (254 aa).

The 245-residue stretch at 2-246 folds into the ABC transporter domain; it reads IQLKNVSKIY…VFDDIYNGGN (245 aa). ATP is bound at residue 35 to 42; the sequence is GLSGAGKS.

Belongs to the ABC transporter superfamily. Phosphonates importer (TC 3.A.1.9.1) family. The complex is composed of two ATP-binding proteins (PhnC), two transmembrane proteins (PhnE) and a solute-binding protein (PhnD).

The protein localises to the cell membrane. The enzyme catalyses phosphonate(out) + ATP + H2O = phosphonate(in) + ADP + phosphate + H(+). Part of the ABC transporter complex PhnCDE involved in phosphonates import. Responsible for energy coupling to the transport system. This chain is Phosphonates import ATP-binding protein PhnC, found in Lactobacillus johnsonii (strain CNCM I-12250 / La1 / NCC 533).